The chain runs to 543 residues: Cytochrome P450 1B1 (543 aa).

Cys470 serves as a coordination point for heme.

It belongs to the cytochrome P450 family. The cofactor is heme. In terms of tissue distribution, expressed in heart, brain, lung, skeletal muscle, kidney, spleen, thymus, prostate, testis, ovary, small intestine, colon, and peripheral blood leukocytes. Expressed in retinal endothelial cells and umbilical vein endothelial cells (at protein level).

The protein localises to the endoplasmic reticulum membrane. The protein resides in the microsome membrane. It is found in the mitochondrion. It catalyses the reaction an organic molecule + reduced [NADPH--hemoprotein reductase] + O2 = an alcohol + oxidized [NADPH--hemoprotein reductase] + H2O + H(+). It carries out the reaction 17beta-estradiol + reduced [NADPH--hemoprotein reductase] + O2 = 2-hydroxy-17beta-estradiol + oxidized [NADPH--hemoprotein reductase] + H2O + H(+). The enzyme catalyses 17beta-estradiol + reduced [NADPH--hemoprotein reductase] + O2 = 4-hydroxy-17beta-estradiol + oxidized [NADPH--hemoprotein reductase] + H2O + H(+). The catalysed reaction is estrone + reduced [NADPH--hemoprotein reductase] + O2 = 2-hydroxyestrone + oxidized [NADPH--hemoprotein reductase] + H2O + H(+). It catalyses the reaction estrone + reduced [NADPH--hemoprotein reductase] + O2 = 4-hydroxyestrone + oxidized [NADPH--hemoprotein reductase] + H2O + H(+). It carries out the reaction testosterone + reduced [NADPH--hemoprotein reductase] + O2 = 6beta,17beta-dihydroxyandrost-4-en-3-one + oxidized [NADPH--hemoprotein reductase] + H2O + H(+). The enzyme catalyses progesterone + reduced [NADPH--hemoprotein reductase] + O2 = 6beta-hydroxyprogesterone + oxidized [NADPH--hemoprotein reductase] + H2O + H(+). The catalysed reaction is progesterone + reduced [NADPH--hemoprotein reductase] + O2 = 16alpha-hydroxyprogesterone + oxidized [NADPH--hemoprotein reductase] + H2O + H(+). It catalyses the reaction all-trans-retinol + reduced [NADPH--hemoprotein reductase] + O2 = all-trans-retinal + oxidized [NADPH--hemoprotein reductase] + 2 H2O + H(+). It carries out the reaction all-trans-retinal + reduced [NADPH--hemoprotein reductase] + O2 = all-trans-retinoate + oxidized [NADPH--hemoprotein reductase] + H2O + 2 H(+). The enzyme catalyses (5Z,8Z,11Z,14Z)-eicosatetraenoate + reduced [NADPH--hemoprotein reductase] + O2 = (8R,9S)-epoxy-(5Z,11Z,14Z)-eicosatrienoate + oxidized [NADPH--hemoprotein reductase] + H2O + H(+). The catalysed reaction is (5Z,8Z,11Z,14Z)-eicosatetraenoate + reduced [NADPH--hemoprotein reductase] + O2 = (11R,12S)-epoxy-(5Z,8Z,14Z)-eicosatrienoate + oxidized [NADPH--hemoprotein reductase] + H2O + H(+). It catalyses the reaction (5Z,8Z,11Z,14Z)-eicosatetraenoate + reduced [NADPH--hemoprotein reductase] + O2 = (11S,12R)-epoxy-(5Z,8Z,14Z)-eicosatrienoate + oxidized [NADPH--hemoprotein reductase] + H2O + H(+). It carries out the reaction (5Z,8Z,11Z,14Z)-eicosatetraenoate + reduced [NADPH--hemoprotein reductase] + O2 = (14R,15S)-epoxy-(5Z,8Z,11Z)-eicosatrienoate + oxidized [NADPH--hemoprotein reductase] + H2O + H(+). The enzyme catalyses (5S)-hydroperoxy-(6E,8Z,11Z,14Z)-eicosatetraenoate = 5-oxo-(6E,8Z,11Z,14Z)-eicosatetraenoate + H2O. The catalysed reaction is (12S)-hydroperoxy-(5Z,8Z,10E,14Z)-eicosatetraenoate = 12-oxo-(5Z,8Z,10E,14Z)-eicosatetraenoate + H2O. It catalyses the reaction (13S)-hydroperoxy-(9Z,11E)-octadecadienoate = 13-oxo-(9Z,11E)-octadecadienoate + H2O. It carries out the reaction (15S)-hydroperoxy-(5Z,8Z,11Z,13E)-eicosatetraenoate = 15-oxo-(5Z,8Z,11Z,13E)-eicosatetraenoate + H2O. The protein operates within steroid hormone biosynthesis. It participates in cofactor metabolism; retinol metabolism. Its pathway is lipid metabolism; arachidonate metabolism. With respect to regulation, enzyme activity is increased by liposomes containing anionic phospholipids, phosphatidic acid and cardiolipin. Inhibited by naringenin with an IC(50) of 5 uM. Enzyme activity is increased by cytochrome b5. Functionally, a cytochrome P450 monooxygenase involved in the metabolism of various endogenous substrates, including fatty acids, steroid hormones and vitamins. Mechanistically, uses molecular oxygen inserting one oxygen atom into a substrate, and reducing the second into a water molecule, with two electrons provided by NADPH via cytochrome P450 reductase (NADPH--hemoprotein reductase). Exhibits catalytic activity for the formation of hydroxyestrogens from estrone (E1) and 17beta-estradiol (E2), namely 2- and 4-hydroxy E1 and E2. Displays a predominant hydroxylase activity toward E2 at the C-4 position. Metabolizes testosterone and progesterone to B or D ring hydroxylated metabolites. May act as a major enzyme for all-trans retinoic acid biosynthesis in extrahepatic tissues. Catalyzes two successive oxidative transformation of all-trans retinol to all-trans retinal and then to the active form all-trans retinoic acid. Catalyzes the epoxidation of double bonds of certain PUFA. Converts arachidonic acid toward epoxyeicosatrienoic acid (EpETrE) regioisomers, 8,9-, 11,12-, and 14,15- EpETrE, that function as lipid mediators in the vascular system. Additionally, displays dehydratase activity toward oxygenated eicosanoids hydroperoxyeicosatetraenoates (HpETEs). This activity is independent of cytochrome P450 reductase, NADPH, and O2. Also involved in the oxidative metabolism of xenobiotics, particularly converting polycyclic aromatic hydrocarbons and heterocyclic aryl amines procarcinogens to DNA-damaging products. Plays an important role in retinal vascular development. Under hyperoxic O2 conditions, promotes retinal angiogenesis and capillary morphogenesis, likely by metabolizing the oxygenated products generated during the oxidative stress. Also, contributes to oxidative homeostasis and ultrastructural organization and function of trabecular meshwork tissue through modulation of POSTN expression. This Homo sapiens (Human) protein is Cytochrome P450 1B1.